The chain runs to 260 residues: Phosphatidate cytidylyltransferase (260 aa).

7 consecutive transmembrane segments (helical) span residues 9-29 (IIAL…LMIF), 46-66 (MIKF…IIML), 70-90 (AGPW…FIVL), 102-122 (FMDA…FMFF), 130-150 (LHYI…AYLF), 172-192 (FIGG…FVDF), and 196-216 (VWIL…GDLV).

Belongs to the CDS family.

It localises to the cell membrane. It catalyses the reaction a 1,2-diacyl-sn-glycero-3-phosphate + CTP + H(+) = a CDP-1,2-diacyl-sn-glycerol + diphosphate. The protein operates within phospholipid metabolism; CDP-diacylglycerol biosynthesis; CDP-diacylglycerol from sn-glycerol 3-phosphate: step 3/3. This chain is Phosphatidate cytidylyltransferase (cdsA), found in Staphylococcus aureus (strain COL).